The chain runs to 642 residues: DNA polymerase III subunit tau (642 aa).

45–52 provides a ligand contact to ATP; the sequence is GTRGVGKT. Residues cysteine 64, cysteine 73, cysteine 76, and cysteine 79 each contribute to the Zn(2+) site. The disordered stretch occupies residues 385–441; that stretch reads TPPQLQQPSAPAPQTSPAPLPASTSQVLAARNQLQRAQGVTKTKKSEPAAASRARPV. The segment covering 394–404 has biased composition (pro residues); the sequence is APAPQTSPAPL. A compositionally biased stretch (polar residues) spans 416-425; the sequence is NQLQRAQGVT.

Belongs to the DnaX/STICHEL family. In terms of assembly, the DNA polymerase holoenzyme is a complex that contains 10 different types of subunits. These subunits are organized into 3 functionally essential subassemblies: the pol III core, the beta sliding clamp processivity factor and the clamp-loading complex. The pol III core (subunits alpha, epsilon and theta) contains the polymerase and the 3'-5' exonuclease proofreading activities. The polymerase is tethered to the template via the sliding clamp processivity factor. The clamp-loading complex assembles the beta processivity factor onto the primer template and plays a central role in the organization and communication at the replication fork. This complex contains delta, delta', psi and chi, and copies of either or both of two different DnaX proteins, gamma and tau. The composition of the holoenzyme is, therefore: (alpha,epsilon,theta)[2]-(isoform:gamma/tau)[3]-delta,delta', psi,chi-beta[4].

It carries out the reaction DNA(n) + a 2'-deoxyribonucleoside 5'-triphosphate = DNA(n+1) + diphosphate. Its function is as follows. DNA polymerase III is a complex, multichain enzyme responsible for most of the replicative synthesis in bacteria. This DNA polymerase also exhibits 3' to 5' exonuclease activity. Functionally, serves as a scaffold to help in the dimerization of the core complex. In terms of biological role, seems to interact with the delta subunit to transfer the beta subunit on the DNA. The protein is DNA polymerase III subunit tau (dnaX) of Salmonella typhimurium (strain LT2 / SGSC1412 / ATCC 700720).